We begin with the raw amino-acid sequence, 559 residues long: Potassium-transporting ATPase potassium-binding subunit (559 aa).

Helical transmembrane passes span 5–25, 27–47, 63–83, 132–152, 170–190, 253–273, 283–303, 327–347, 356–376, 379–399, 416–436, 484–504, and 524–544; these read GFLL…PLGS, LARL…RILW, LLAL…LLFW, GLTV…FALI, LVRI…LFFI, LAQM…FGEA, LLWA…WAEV, FGVL…CGAV, ALGG…FGGV, GLYG…LMIG, MTAL…ALAM, LLAF…MAIA, and GALF…LTFI.

This sequence belongs to the KdpA family. In terms of assembly, the system is composed of three essential subunits: KdpA, KdpB and KdpC.

The protein resides in the cell inner membrane. Its function is as follows. Part of the high-affinity ATP-driven potassium transport (or Kdp) system, which catalyzes the hydrolysis of ATP coupled with the electrogenic transport of potassium into the cytoplasm. This subunit binds the periplasmic potassium ions and delivers the ions to the membrane domain of KdpB through an intramembrane tunnel. The protein is Potassium-transporting ATPase potassium-binding subunit of Salmonella heidelberg (strain SL476).